The sequence spans 147 residues: Thyrotropin subunit beta (147 aa).

Positions 1 to 20 (MRVVLLASGVLCLLAGQVLS) are cleaved as a signal peptide. Intrachain disulfides connect Cys22–Cys72, Cys36–Cys87, Cys39–Cys126, Cys47–Cys103, Cys51–Cys105, and Cys108–Cys115. N-linked (GlcNAc...) asparagine glycosylation is present at Asn43.

This sequence belongs to the glycoprotein hormones subunit beta family. As to quaternary structure, heterodimer of a common alpha chain and a unique beta chain which confers biological specificity to thyrotropin, lutropin, follitropin and gonadotropin.

Its subcellular location is the secreted. In terms of biological role, indispensable for the control of thyroid structure and metabolism. May play some role in the biological processes of the immature fishes. The polypeptide is Thyrotropin subunit beta (tshb) (Anguilla japonica (Japanese eel)).